The chain runs to 79 residues: Conotoxin Cal9.2a (79 aa).

An N-terminal signal peptide occupies residues 1–23; sequence MNCYLILTVALLLTSAMTGTTTA. Residues 24-33 constitute a propeptide that is removed on maturation; the sequence is GQLNKKGVTL. 3 disulfide bridges follow: cysteine 41-cysteine 58, cysteine 46-cysteine 68, and cysteine 48-cysteine 73.

In terms of tissue distribution, expressed by the venom duct.

It is found in the secreted. Functionally, probable neurotoxin with unknown target. Possibly targets ion channels. The chain is Conotoxin Cal9.2a from Californiconus californicus (California cone).